A 439-amino-acid polypeptide reads, in one-letter code: Enolase 1-1 (439 aa).

Thr85 carries the phosphothreonine modification. Positions 159 and 168 each coordinate substrate. Catalysis depends on Glu211, which acts as the Proton donor. Asp246 contacts Mg(2+). Phosphoserine is present on residues Ser249 and Ser250. Tyr253 is modified (phosphotyrosine). Glu295 and Asp320 together coordinate substrate. The Mg(2+) site is built by Glu295 and Asp320. Residue Lys345 is the Proton acceptor of the active site. The residue at position 351 (Ser351) is a Phosphoserine. Position 353 is a phosphothreonine (Thr353). Position 355 is a phosphoserine (Ser355). Substrate-binding positions include 372–375 and Lys396; that span reads SHRS. Ser421 carries the post-translational modification Phosphoserine.

This sequence belongs to the enolase family. Homodimer. Mg(2+) serves as cofactor.

It localises to the cytoplasm. It carries out the reaction (2R)-2-phosphoglycerate = phosphoenolpyruvate + H2O. It functions in the pathway carbohydrate degradation; glycolysis; pyruvate from D-glyceraldehyde 3-phosphate: step 4/5. In Schizosaccharomyces pombe (strain 972 / ATCC 24843) (Fission yeast), this protein is Enolase 1-1 (eno101).